A 69-amino-acid chain; its full sequence is Toxin Tz2 (69 aa).

The signal sequence occupies residues 1 to 7 (IEVVMGG). An LCN-type CS-alpha/beta domain is found at 8 to 69 (KEGYLLDKSN…KMWDLKTNKC (62 aa)). 4 cysteine pairs are disulfide-bonded: Cys-19–Cys-69, Cys-23–Cys-45, Cys-31–Cys-50, and Cys-35–Cys-52.

The protein belongs to the long (4 C-C) scorpion toxin superfamily. Sodium channel inhibitor family. Beta subfamily. Expressed by the venom gland.

It is found in the secreted. Its function is as follows. Beta toxins bind voltage-independently at site-4 of sodium channels (Nav) and shift the voltage of activation toward more negative potentials thereby affecting sodium channel activation and promoting spontaneous and repetitive firing. The protein is Toxin Tz2 of Tityus zulianus (Venezuelan scorpion).